The following is a 515-amino-acid chain: Fatty acyl-CoA reductase 1 (515 aa).

Over 1 to 465 the chain is Cytoplasmic; that stretch reads MVSIPEYYEG…ARKHLNKLRN (465 aa). Positions 451–507 are necessary and sufficient for PEX19-mediated localization into peroxisome membrane; that stretch reads SGLPAARKHLNKLRNIRYGFNTILVILIWRIFIARSQMARNIWYFVVSLCYKFLSYF. Residues 466–483 traverse the membrane as a helical segment; that stretch reads IRYGFNTILVILIWRIFI. At 484–515 the chain is on the peroxisomal side; it reads ARSQMARNIWYFVVSLCYKFLSYFRASSTMRY.

This sequence belongs to the fatty acyl-CoA reductase family. Interacts with PEX19; PEX19 mediates the targeting of FAR1 to peroxisomes.

It localises to the peroxisome membrane. It carries out the reaction a long-chain fatty acyl-CoA + 2 NADPH + 2 H(+) = a long-chain primary fatty alcohol + 2 NADP(+) + CoA. The catalysed reaction is hexadecanoyl-CoA + 2 NADPH + 2 H(+) = hexadecan-1-ol + 2 NADP(+) + CoA. It catalyses the reaction octadecanoyl-CoA + 2 NADPH + 2 H(+) = octadecan-1-ol + 2 NADP(+) + CoA. The enzyme catalyses (9Z)-octadecenoyl-CoA + 2 NADPH + 2 H(+) = (9Z)-octadecen-1-ol + 2 NADP(+) + CoA. It carries out the reaction (9Z,12Z)-octadecadienoyl-CoA + 2 NADPH + 2 H(+) = (9Z,12Z)-octadecadien-1-ol + 2 NADP(+) + CoA. The catalysed reaction is eicosanoyl-CoA + 2 NADPH + 2 H(+) = eicosan-1-ol + 2 NADP(+) + CoA. It catalyses the reaction 16-methylheptadecanoyl-CoA + 2 NADPH + 2 H(+) = 16-methylheptadecan-1-ol + 2 NADP(+) + CoA. The enzyme catalyses 18-methylnonadecanoyl-CoA + 2 NADPH + 2 H(+) = 18-methylnonadecan-1-ol + 2 NADP(+) + CoA. Catalyzes the reduction of saturated and unsaturated C16 or C18 fatty acyl-CoA to fatty alcohols. It plays an essential role in the production of ether lipids/plasmalogens which synthesis requires fatty alcohols. In parallel, it is also required for wax monoesters production since fatty alcohols also constitute a substrate for their synthesis. In terms of biological role, catalyzes the reduction of saturated and unsaturated C16 or C18 fatty acyl-CoA to fatty alcohols. It plays an essential role in the production of ether lipids/plasmalogens which synthesis requires fatty alcohols. In parallel, it is also required for wax monoesters production since fatty alcohols also constitute a substrate for their synthesis. This is Fatty acyl-CoA reductase 1 from Rattus norvegicus (Rat).